We begin with the raw amino-acid sequence, 524 residues long: L-lactate permease (524 aa).

Helical transmembrane passes span 12–34 (LAVS…TVFK), 38–60 (IQAA…HLPF), 67–89 (IVQG…VWLY), 127–149 (LEGA…SLGF), 156–178 (MLCL…VGII), 193–215 (SMMT…IWLM), 224–246 (ILPA…TIFI), 250–267 (LADI…ALFL), 297–319 (WSPF…KGLL), 339–361 (IEVG…VTTV), 374–396 (SLLK…IIGI), 411–433 (EAVA…IGVF), and 505–522 (YSFG…ILSL).

The protein belongs to the lactate permease family.

It localises to the cell membrane. Functionally, may play a role in L-lactate transport. The chain is L-lactate permease (lctP) from Halalkalibacterium halodurans (strain ATCC BAA-125 / DSM 18197 / FERM 7344 / JCM 9153 / C-125) (Bacillus halodurans).